The following is a 312-amino-acid chain: Glutaminase (312 aa).

Ser-67, Asn-118, Glu-162, Asn-169, Tyr-193, Tyr-245, and Val-263 together coordinate substrate.

This sequence belongs to the glutaminase family. As to quaternary structure, homotetramer.

The catalysed reaction is L-glutamine + H2O = L-glutamate + NH4(+). The protein is Glutaminase of Bordetella avium (strain 197N).